Consider the following 208-residue polypeptide: ATP-dependent Clp protease proteolytic subunit (208 aa).

Residue serine 98 is the Nucleophile of the active site. Residue histidine 123 is part of the active site.

Belongs to the peptidase S14 family. In terms of assembly, fourteen ClpP subunits assemble into 2 heptameric rings which stack back to back to give a disk-like structure with a central cavity, resembling the structure of eukaryotic proteasomes.

The protein resides in the cytoplasm. It catalyses the reaction Hydrolysis of proteins to small peptides in the presence of ATP and magnesium. alpha-casein is the usual test substrate. In the absence of ATP, only oligopeptides shorter than five residues are hydrolyzed (such as succinyl-Leu-Tyr-|-NHMec, and Leu-Tyr-Leu-|-Tyr-Trp, in which cleavage of the -Tyr-|-Leu- and -Tyr-|-Trp bonds also occurs).. Functionally, cleaves peptides in various proteins in a process that requires ATP hydrolysis. Has a chymotrypsin-like activity. Plays a major role in the degradation of misfolded proteins. This chain is ATP-dependent Clp protease proteolytic subunit, found in Wolbachia sp. subsp. Brugia malayi (strain TRS).